The sequence spans 362 residues: MDKVMAQLEGLVAHYEELQEMMADPEVINDTKRYMEISKEEADMREVVQKYRKYKSDIKEIDDNKEIISSESDDDLVEMAKEENSELEKEVAKLEDEIKILMLPKDPNDDKDIIMEIRGAAGGDEASLFAGDLLRMYEKYAETQGWKVSLIDSEPTEVGGYKRVAVMITGDKVYSKLKYENGAHRVQRVPVTESQGRVHTSTATVAVMPEYEQVDIDLDPKDIRVDVYRSSGAGGQHINKTSSAVRMTHLPTGIVVAMQDQRSQQQNREKAMQILKSRVYDYYESQNRDKYDAKRKDAVGTGDRSERIRTYNYPQNRVTDHRIGLTLNKLDRVMNGELDEIINALVLYYQTQQLEKMAEENA.

The residue at position 236 (glutamine 236) is an N5-methylglutamine.

This sequence belongs to the prokaryotic/mitochondrial release factor family. Post-translationally, methylated by PrmC. Methylation increases the termination efficiency of RF1.

It is found in the cytoplasm. In terms of biological role, peptide chain release factor 1 directs the termination of translation in response to the peptide chain termination codons UAG and UAA. This Lactobacillus gasseri (strain ATCC 33323 / DSM 20243 / BCRC 14619 / CIP 102991 / JCM 1131 / KCTC 3163 / NCIMB 11718 / NCTC 13722 / AM63) protein is Peptide chain release factor 1.